The primary structure comprises 339 residues: MTIQKNWQELIRPNKLVVTPGSDPTRFATLVAEPLERGFGQTLGNALRRVLLSSLQGAAVQSVHIDGVLHEFSSIAGVREDVTDIVLNIKDISIKMQGEGPKRMVVKKQGPGTVTAGDIQTVGDVVVLNPDLQICTLDEGAEIRMEFTVAGGKGYVAAERNRPEDAPIGLIPVDSLFSPVRKVSYKVENTREGQILDYDKLTMTIETNGAISPDDAVAYAARILQDQLNVFVNFEEPRKEVTQEIIPDLAFNPAFLKKVDELELSVRSANCLKNDNIVYIGDLVQKSEAEMLRTPNFGRKSLNEIKEVLAQMGLHLGMEVPGWPPENIDELAKRFEDHY.

Residues 1-235 are alpha N-terminal domain (alpha-NTD); the sequence is MTIQKNWQEL…DQLNVFVNFE (235 aa). The segment at 251 to 339 is alpha C-terminal domain (alpha-CTD); that stretch reads FNPAFLKKVD…ELAKRFEDHY (89 aa).

The protein belongs to the RNA polymerase alpha chain family. In terms of assembly, homodimer. The RNAP catalytic core consists of 2 alpha, 1 beta, 1 beta' and 1 omega subunit. When a sigma factor is associated with the core the holoenzyme is formed, which can initiate transcription.

The enzyme catalyses RNA(n) + a ribonucleoside 5'-triphosphate = RNA(n+1) + diphosphate. Functionally, DNA-dependent RNA polymerase catalyzes the transcription of DNA into RNA using the four ribonucleoside triphosphates as substrates. In Rhodopseudomonas palustris (strain BisB18), this protein is DNA-directed RNA polymerase subunit alpha.